Consider the following 60-residue polypeptide: Large ribosomal subunit protein uL30 (60 aa).

The protein belongs to the universal ribosomal protein uL30 family. Part of the 50S ribosomal subunit.

The chain is Large ribosomal subunit protein uL30 from Streptococcus uberis (strain ATCC BAA-854 / 0140J).